The primary structure comprises 274 residues: Energy-coupling factor transporter ATP-binding protein EcfA (274 aa).

In terms of domain architecture, ABC transporter spans 2–235; sequence IRLENVSYNY…LSLRYLGLTP (234 aa). Position 35-42 (35-42) interacts with ATP; the sequence is GKNGSGKS.

Belongs to the ABC transporter superfamily. Energy-coupling factor EcfA family. In terms of assembly, forms a stable energy-coupling factor (ECF) transporter complex composed of 2 membrane-embedded substrate-binding proteins (S component), 2 ATP-binding proteins (A component) and 2 transmembrane proteins (T component).

Its subcellular location is the cell membrane. Its function is as follows. ATP-binding (A) component of a common energy-coupling factor (ECF) ABC-transporter complex. Unlike classic ABC transporters this ECF transporter provides the energy necessary to transport a number of different substrates. The chain is Energy-coupling factor transporter ATP-binding protein EcfA from Methanosarcina acetivorans (strain ATCC 35395 / DSM 2834 / JCM 12185 / C2A).